The chain runs to 201 residues: Lipopolysaccharide core heptose(II)-phosphate phosphatase (201 aa).

The signal sequence occupies residues 1–35 (MLAFTLRFIKNKRYLATLAGALVIIAGLTSQHAWS).

Belongs to the phosphoglycerate mutase family. Ais subfamily.

It is found in the periplasm. It functions in the pathway bacterial outer membrane biogenesis; lipopolysaccharide metabolism. Functionally, catalyzes the dephosphorylation of heptose(II) of the outer membrane lipopolysaccharide core. This Salmonella choleraesuis (strain SC-B67) protein is Lipopolysaccharide core heptose(II)-phosphate phosphatase.